The chain runs to 416 residues: uncharacterized protein (416 aa).

An N-acetyltransferase domain is found at 3 to 150 (LDVRTITPSE…SVYRAGLDAR (148 aa)). Residues 83–85 (VTV) and 91–96 (RRGLLS) contribute to the acetyl-CoA site. Residue tyrosine 124 is the Proton donor of the active site. Phenylalanine 416 functions as the Proton acceptor; via carboxylate in the catalytic mechanism.

It belongs to the acetyltransferase Eis family. In terms of assembly, homohexamer; trimer of dimers.

This is an uncharacterized protein from Streptomyces griseus subsp. griseus (strain JCM 4626 / CBS 651.72 / NBRC 13350 / KCC S-0626 / ISP 5235).